An 89-amino-acid polypeptide reads, in one-letter code: ATP synthase subunit H, mitochondrial (89 aa).

As to quaternary structure, F-type ATP synthases have 2 components, the catalytic core F(1) and the membrane-embedded component F(0), linked together by a central stalk and a peripheral stalk. The central stalk, also called rotor shaft, is often seen as part of F(1). The peripheral stalk is seen as part of F(0). F(0) contains the membrane channel next to the rotor. F-type ATP synthases form dimers but each monomer functions independently in ATP generation. The dimer consists of 18 different polypeptides: ATP1 (subunit alpha, part of F(1), 3 molecules per monomer), ATP2 (subunit beta, part of F(1), 3 molecules per monomer), ATP3 (subunit gamma, part of the central stalk), ATP4 (subunit b, part of the peripheral stalk), ATP5/OSCP (subunit 5/OSCP, part of the peripheral stalk), ATP6 (subunit a, part of the peripheral stalk), ATP7 (subunit d, part of the peripheral stalk), ATP8 (subunit 8, part of the peripheral stalk), OLI1 (subunit c, part of the rotor, 10 molecules per monomer), ATP14 (subunit H, part of the peripheral stalk), ATP15 (subunit epsilon, part of the central stalk), ATP16 (subunit delta, part of the central stalk), ATP17 (subunit f, part of the peripheral stalk), ATP18 (subunit i/j, part of the peripheral stalk). Dimer-specific subunits are ATP19 (subunit k, at interface between monomers), ATP20 (subunit g, at interface between monomers), TIM11 (subunit e, at interface between monomers). Also contains subunit L.

The protein resides in the mitochondrion inner membrane. Its function is as follows. Mitochondrial membrane ATP synthase (F(1)F(0) ATP synthase or Complex V) produces ATP from ADP in the presence of a proton gradient across the membrane which is generated by electron transport complexes of the respiratory chain. F-type ATP synthases consist of two structural domains, F(1) - containing the extramembraneous catalytic core, and F(0) - containing the membrane proton channel, linked together by a central stalk and a peripheral stalk. During catalysis, ATP synthesis in the catalytic domain of F(1) is coupled via a rotary mechanism of the central stalk subunits to proton translocation. Part of the peripheral stalk. This Pichia angusta (Yeast) protein is ATP synthase subunit H, mitochondrial.